The sequence spans 242 residues: MYFYLKYNINNMIMRRVRSFVSRNRKLTQNKRQFLKNYLLKYGIDFSCSYVNFNFIFNNEYPVILEIGFGTGEFLINMARKNLFSNFLGIEVYIPSILSCLRYIHKYNLPNVKVIFYDAVEVISYMISNNSLSEVYILFPDPWPKRRHHKRRIITKELLEVILKKLVFGGYLNIATDCQIYAKSILNIIENIKGYINLSNTGDYVIRSDYRLVTKFEKKGLVLGNKIFNLKFKSIFNNSNFL.

S-adenosyl-L-methionine-binding residues include glutamate 66, glutamate 91, aspartate 118, and aspartate 141. Aspartate 141 is an active-site residue. Substrate contacts are provided by residues lysine 145, aspartate 177, and 214-217; that span reads TKFE.

This sequence belongs to the class I-like SAM-binding methyltransferase superfamily. TrmB family. In terms of assembly, monomer.

The enzyme catalyses guanosine(46) in tRNA + S-adenosyl-L-methionine = N(7)-methylguanosine(46) in tRNA + S-adenosyl-L-homocysteine. Its pathway is tRNA modification; N(7)-methylguanine-tRNA biosynthesis. Functionally, catalyzes the formation of N(7)-methylguanine at position 46 (m7G46) in tRNA. This chain is tRNA (guanine-N(7)-)-methyltransferase, found in Buchnera aphidicola subsp. Baizongia pistaciae (strain Bp).